The following is a 518-amino-acid chain: Bifunctional purine biosynthesis protein PurH (518 aa).

Positions 1–144 (MSKRALISVS…KNHASVTVVC (144 aa)) constitute an MGS-like domain.

The protein belongs to the PurH family.

It carries out the reaction (6R)-10-formyltetrahydrofolate + 5-amino-1-(5-phospho-beta-D-ribosyl)imidazole-4-carboxamide = 5-formamido-1-(5-phospho-D-ribosyl)imidazole-4-carboxamide + (6S)-5,6,7,8-tetrahydrofolate. It catalyses the reaction IMP + H2O = 5-formamido-1-(5-phospho-D-ribosyl)imidazole-4-carboxamide. It functions in the pathway purine metabolism; IMP biosynthesis via de novo pathway; 5-formamido-1-(5-phospho-D-ribosyl)imidazole-4-carboxamide from 5-amino-1-(5-phospho-D-ribosyl)imidazole-4-carboxamide (10-formyl THF route): step 1/1. Its pathway is purine metabolism; IMP biosynthesis via de novo pathway; IMP from 5-formamido-1-(5-phospho-D-ribosyl)imidazole-4-carboxamide: step 1/1. The polypeptide is Bifunctional purine biosynthesis protein PurH (Lactococcus lactis subsp. lactis (strain IL1403) (Streptococcus lactis)).